Reading from the N-terminus, the 245-residue chain is Glycerophosphodiester phosphodiesterase (245 aa).

The region spanning 2-241 (TKIFAHRGFK…DFPDRAVKIR (240 aa)) is the GP-PDE domain. The Proton acceptor role is filled by His7. Residues Glu34 and Asp36 each contribute to the a divalent metal cation site. The active-site Proton donor is His49. Glu110 provides a ligand contact to a divalent metal cation.

The protein belongs to the glycerophosphoryl diester phosphodiesterase family. It depends on Ni(2+) as a cofactor. Co(2+) serves as cofactor. Mn(2+) is required as a cofactor.

The enzyme catalyses a sn-glycero-3-phosphodiester + H2O = an alcohol + sn-glycerol 3-phosphate + H(+). Inhibited by EDTA and various organic solvents such as chloroform, toluene or benzene. In terms of biological role, glycerophosphodiester phosphodiesterase hydrolyzes glycerophosphodiesters into glycerol-3-phosphate (G3P) and the corresponding alcohol. Can hydrolyze the model substrate bis-(p-nitrophenyl phosphate) (bis(pNPP)) to p-nitrophenol. Can also catalyze the degradation of diphenyl phosphate (DPHP) to phenyl phosphate (PHP). DPHP is an aryl phosphate ester used as a chemical additive and an industrial catalyst that can easily spread to the environment and exhibits toxicity toward organisms. The protein is Glycerophosphodiester phosphodiesterase of Bacillus altitudinis.